The chain runs to 229 residues: Protein 33K (229 aa).

The segment at 1 to 157 (MAPKKKLQLP…GALRLAPNEP (157 aa)) is disordered. The segment covering 14–54 (TDEEEYWDSQAEEVLDEEEEDMMEDWESLDEEASEVEEVSD) has biased composition (acidic residues). Composition is skewed to low complexity over residues 55-64 (ETPSPSVAFP), 71-82 (SATGSSMATTSA), and 100-122 (TTGT…AAAT). The necessary for nuclear subcellular location stretch occupies residues 172 to 199 (YAIFQQSRGQEQELKIKNRSLRSLTRSC). The segment at 178–198 (SRGQEQELKIKNRSLRSLTRS) is RS-repeat; required for splicing enhancer activity.

This sequence belongs to the adenoviridae splicing factor family. In terms of assembly, homooligomer. Interacts with DBP; this interaction occurs at a unique vertex during genome packaging. Interacts with IVa2; this interaction occurs at a unique vertex during genome packaging and seems to potentiate IVa2 and 33K oligomerization. Post-translationally, phosphorylated in vitro by human PKA and PRKDC. PRKDC inhibits, whereas PKA activates the splicing factor.

The protein localises to the host nucleus. Its function is as follows. Promotes alternative splicing of late transcripts by promoting splicing at weak 3' splice sites. Required for the temporal activation of major late pre-mRNA splicing at late times of infection. Induces the splicing and expression of the late capsid vertex protein. In terms of biological role, probably functions as the small terminase that is part of the molecular motor that translocates genomic DNA in empty capsid during DNA packaging. This motor is located at a unique vertex and comprises at least the IVa2 ATPase, the small terminase 33K and probably a portal. Forms a ring-like structure of about 17 nm in which genomic DNA is translocated into the capsid. Stimulates IVa2 ATPase activity in the presence of the viral genome. Once the DNA is packaged, the terminase detaches: the 33K protein is present in the empty particles, but not in the mature virions. Also involved in virion assembly. The polypeptide is Protein 33K (Homo sapiens (Human)).